A 96-amino-acid chain; its full sequence is Integration host factor subunit beta (96 aa).

Belongs to the bacterial histone-like protein family. As to quaternary structure, heterodimer of an alpha and a beta chain.

This protein is one of the two subunits of integration host factor, a specific DNA-binding protein that functions in genetic recombination as well as in transcriptional and translational control. This chain is Integration host factor subunit beta, found in Photobacterium profundum (strain SS9).